Consider the following 1438-residue polypeptide: MDSDTSSADFHSTETLVSTPKYSYGVLINVILLVSWTCFRVVNWFLVTLPSILLGMLSKTFQITLSLSSILMFVVAVTAICFLVVRYKYLTRYSRNSAAKEPAKKSFDIDDLSKKKKSSSKTSSNYLDQFLSAIQVFGYLEGPVFHELTRNMTTQKVLPNEVLYLDESLGFSIVVEGTMQVYTKVTNLSNSSLNAEDDGLDLRYENDDVLCIGNDKYQLLNEVKSGAPLSSLMSTLDLFTSNEVPLSPTKFGSYSLTAVTPLELSPNNTGGNSPPPSLAPEIVARPKGTTSTTLAIIPYTAFQRLHKKYPKATSHIVTMVLTRLYKVSMNTIYNYLGLSKDILDCERNLNAETNERLPSYLSKGIIEKFHKTEESASVEGSPTLPRRSTVNLRALTRQASSSRYVVLASRSKSTHPGDLLSSVPLSRRSDYYETQTIPNESEDSPTIQRSSLRRRASHSTSLRKSNSVLEDIRVRGFSNEREETEETSLRTAIVEQIFTHLGISEDDPTVMNINPTSASSSASSSIVGISKLNYGSLDSINSPRVDPMTSIRSSLASNGNKVYQTINQHTKEADVLQEKPKKVVLPGSRGDDSDFVAVKDEFARAIQMKYIQPGKTIIEQDSFHTGIFYVIDGSLDVIQESNGKSKKIYTVKAGGITGYLNCLIGMKSLVSVKASEDSSAIVAHIPSHMYSKLIDKFYFLQLPIARRLKRLLSKQFLTIDYALEWCHISAGDILSKEGEPANGFHIVLSGRFRVVKFKTPFKPVASKAGHDTYDYNDNLIDESNKKYTSNDVEILGEYGHGESIGEVEVLTASLRKNTLIAVRDSETARIPRALFELLSLQNPSIMVKVSRIVANRLSKKDSEEILDKPLAMTSSDSPYISSNFKTITILPTVSQLPVREFADKLVQALKAIGRNVIALDQASTLTHLGKHAFDERLAELKLSGYFAYLEEKYETIVYVCDTPVKSNWTSTCISQGDCILLLADADDEDTAESIGSYERLLIKLKTTARTDLCLIHPEKYVTPGSTSIWLKNRVWVQGHHHIQMEISPTQTTSVMKPKIPIISELAKKIKDRANPNIKLKLEEVKGKALASFVKLNNKINAHGRMSFNGVSVHKNDFLRLARILSNEAVGLVLGGGGSRGISHVGVVIALEKHGIPIDLVGGTSIGSFVGGLYAMDYNTVSIYGRAKKFAKRVSSFWRILTDLTYPVTSYMTGYEFNRGIWKIFGFTEIEDFWLRYFCNSTNITNSTMDIHETGYSWRFIRASMSLAGLLPPITYNGSMLLDGGYLDNLPVSEMKKKGAKYIIAVDVGSVDDRTPMNYGDTLSGFWVLLNRWNPFSKHPDVPNMMDIQLRLAYVASVNALEISKKTPGVMYLRPPIENYATLDFAKYDEIYRVGYVYADELFTSWKSSGKLPDIAGMGDKVRKDMSGEHVSLSRRNSI.

The Cytoplasmic portion of the chain corresponds to 1–25 (MDSDTSSADFHSTETLVSTPKYSYG). Residues 26 to 46 (VLINVILLVSWTCFRVVNWFL) form a helical membrane-spanning segment. The Lumenal segment spans residues 47–64 (VTLPSILLGMLSKTFQIT). Residues 65 to 85 (LSLSSILMFVVAVTAICFLVV) traverse the membrane as a helical segment. Over 86 to 1438 (RYKYLTRYSR…HVSLSRRNSI (1353 aa)) the chain is Cytoplasmic. A compositionally biased stretch (polar residues) spans 432–450 (YETQTIPNESEDSPTIQRS). Residues 432–464 (YETQTIPNESEDSPTIQRSSLRRRASHSTSLRK) form a disordered region. A nucleoside 3',5'-cyclic phosphate is bound by residues 590-720 (GDDS…LTID) and 707-856 (RLKR…VANR). Residues 1131-1295 (LVLGGGGSRG…LDNLPVSEMK (165 aa)) enclose the PNPLA domain. The short motif at 1135–1140 (GGGSRG) is the GXGXXG element. The GXSXG motif lies at 1162-1166 (GTSIG). Residue Ser1164 is the Nucleophile of the active site. Catalysis depends on Asp1282, which acts as the Proton acceptor. Positions 1282–1284 (DGG) match the DGA/G motif.

Belongs to the NTE family.

It localises to the endoplasmic reticulum membrane. The catalysed reaction is a 1-acyl-sn-glycero-3-phosphocholine + H2O = sn-glycerol 3-phosphocholine + a fatty acid + H(+). Its activity is regulated as follows. Inhibited by organophosphorus esters. Intracellular phospholipase B that catalyzes the double deacylation of phosphatidylcholine (PC) to glycerophosphocholine (GroPCho). Plays an important role in membrane lipid homeostasis. Responsible for the rapid PC turnover in response to inositol, elevated temperatures, or when choline is present in the growth medium. This Meyerozyma guilliermondii (strain ATCC 6260 / CBS 566 / DSM 6381 / JCM 1539 / NBRC 10279 / NRRL Y-324) (Yeast) protein is Lysophospholipase NTE1 (NTE1).